Here is a 225-residue protein sequence, read N- to C-terminus: Tryptophan synthase beta chain (225 aa).

The protein belongs to the TrpB family. As to quaternary structure, tetramer of two alpha and two beta chains. The cofactor is pyridoxal 5'-phosphate.

It catalyses the reaction (1S,2R)-1-C-(indol-3-yl)glycerol 3-phosphate + L-serine = D-glyceraldehyde 3-phosphate + L-tryptophan + H2O. It participates in amino-acid biosynthesis; L-tryptophan biosynthesis; L-tryptophan from chorismate: step 5/5. In terms of biological role, the beta subunit is responsible for the synthesis of L-tryptophan from indole and L-serine. This Buchnera aphidicola subsp. Rhopalosiphum maidis protein is Tryptophan synthase beta chain (trpB).